Consider the following 687-residue polypeptide: C-mannosyltransferase dpy-19 (687 aa).

11 helical membrane-spanning segments follow: residues 24–44 (GISG…VGFL), 170–190 (ITGV…LGVL), 191–211 (VSDS…NHGE), 223–243 (ESFA…IIKY), 253–273 (LLIS…FAFF), 276–296 (ICSI…AKTI), 303–323 (AFFI…ALYF), 324–344 (PSIW…GIRL), 347–367 (LYLL…KVGF), 415–435 (LSST…SWDF), and 454–474 (GEVI…VLIM).

It belongs to the dpy-19 family.

It localises to the endoplasmic reticulum membrane. C-mannosyltransferase that mediates C-mannosylation of tryptophan residues on target proteins such as unc-5 and mig-21. Mediates the attachment of alpha-mannose in C-C linkage to the C2 of the indole ring of tryptophan. C-mannosylation takes place in the endoplasmic reticulum and frequently found in thrombospondin (TSP) type-1 repeats and in the WSXWS motif of type I cytokine receptors. Required to orient neuroblasts QL and QR correctly on the anterior/posterior (A/P) axis: QL and QR are born in the same A/P position, but polarize and migrate left/right asymmetrically, QL migrates toward the posterior and QR migrates toward the anterior. Required with unc-40 to express mab-5 correctly in the Q cell descendants. This Caenorhabditis briggsae protein is C-mannosyltransferase dpy-19.